The primary structure comprises 414 residues: Carboxynorspermidine synthase (414 aa).

It belongs to the saccharopine dehydrogenase family. Carboxynorspermidine synthase subfamily.

The catalysed reaction is carboxynorspermidine + NADP(+) + H2O = L-aspartate 4-semialdehyde + propane-1,3-diamine + NADPH + H(+). It catalyses the reaction carboxyspermidine + NADP(+) + H2O = L-aspartate 4-semialdehyde + putrescine + NADPH + H(+). Functionally, involved in norspermidine biosynthesis. Catalyzes the synthesis of carboxynorspermidine from L-aspartate 4-semialdehyde and 1,3-diaminopropane. Is also active with putrescine as a substrate. Essential for biofilm formation. The protein is Carboxynorspermidine synthase of Vibrio cholerae serotype O1 (strain ATCC 39315 / El Tor Inaba N16961).